Consider the following 93-residue polypeptide: UPF0358 protein ABC2396 (93 aa).

The protein belongs to the UPF0358 family.

In Shouchella clausii (strain KSM-K16) (Alkalihalobacillus clausii), this protein is UPF0358 protein ABC2396.